A 229-amino-acid polypeptide reads, in one-letter code: UPF0173 metal-dependent hydrolase SAB1566c (229 aa).

This sequence belongs to the UPF0173 family.

The sequence is that of UPF0173 metal-dependent hydrolase SAB1566c from Staphylococcus aureus (strain bovine RF122 / ET3-1).